The chain runs to 130 residues: Large ribosomal subunit protein bL19 (130 aa).

It belongs to the bacterial ribosomal protein bL19 family.

Functionally, this protein is located at the 30S-50S ribosomal subunit interface and may play a role in the structure and function of the aminoacyl-tRNA binding site. This chain is Large ribosomal subunit protein bL19, found in Psychrobacter arcticus (strain DSM 17307 / VKM B-2377 / 273-4).